The following is a 300-amino-acid chain: Glycerol-3-phosphate dehydrogenase [NAD(P)+] (300 aa).

NADPH contacts are provided by Trp-11, Lys-33, and Lys-79. Residues Lys-79, Gly-107, and Ser-109 each coordinate sn-glycerol 3-phosphate. Ala-111 contacts NADPH. 5 residues coordinate sn-glycerol 3-phosphate: Lys-161, Asp-214, Ser-224, Arg-225, and Asn-226. The Proton acceptor role is filled by Lys-161. NADPH is bound at residue Arg-225. NADPH contacts are provided by Val-249 and Glu-251.

It belongs to the NAD-dependent glycerol-3-phosphate dehydrogenase family.

It is found in the cytoplasm. The enzyme catalyses sn-glycerol 3-phosphate + NAD(+) = dihydroxyacetone phosphate + NADH + H(+). It catalyses the reaction sn-glycerol 3-phosphate + NADP(+) = dihydroxyacetone phosphate + NADPH + H(+). Its pathway is membrane lipid metabolism; glycerophospholipid metabolism. In terms of biological role, catalyzes the reduction of the glycolytic intermediate dihydroxyacetone phosphate (DHAP) to sn-glycerol 3-phosphate (G3P), the key precursor for phospholipid synthesis. In Campylobacter lari (strain RM2100 / D67 / ATCC BAA-1060), this protein is Glycerol-3-phosphate dehydrogenase [NAD(P)+].